We begin with the raw amino-acid sequence, 468 residues long: GDNF family receptor alpha-1 (468 aa).

A signal peptide spans 1–24 (MFLATLYFALPLLDLLMSAEVSGG). A run of 3 repeats spans residues 25–113 (DRLD…LQGN), 150–238 (KGNN…YEER), and 239–342 (ERPN…KNAI). Cys-36 and Cys-42 are joined by a disulfide. Residue Asn-59 is glycosylated (N-linked (GlcNAc...) asparagine). Intrachain disulfides connect Cys-154–Cys-214, Cys-161–Cys-167, Cys-178–Cys-192, Cys-187–Cys-233, Cys-216–Cys-221, Cys-243–Cys-313, Cys-250–Cys-256, Cys-267–Cys-285, Cys-277–Cys-337, and Cys-315–Cys-325. Asn-347 and Asn-406 each carry an N-linked (GlcNAc...) asparagine glycan. Ser-430 carries GPI-anchor amidated serine lipidation. A propeptide spans 431 to 468 (HITTKSMAAPPSCSLSSLPVLMLTALAALLSVSLAETS) (removed in mature form).

It belongs to the GDNFR family. Interacts with GDNF ligand and RET: forms a 2:2:2 ternary complex composed of GDNF ligand, GFRA1 and RET receptor. Interacts with SORL1, either alone or in complex with GDNF. Interaction between SORL1 and GFRA1 leads to GFRA1 internalization, but not degradation. Expressed in liver, brain, kidney and cochlea.

The protein localises to the cell membrane. The protein resides in the golgi apparatus. Its subcellular location is the trans-Golgi network. It is found in the endosome. It localises to the multivesicular body. Functionally, coreceptor for GDNF, a neurotrophic factor that enhances survival and morphological differentiation of dopaminergic neurons and increases their high-affinity dopamine uptake. GDNF-binding leads to autophosphorylation and activation of the RET receptor. This chain is GDNF family receptor alpha-1 (Gfra1), found in Rattus norvegicus (Rat).